A 146-amino-acid chain; its full sequence is Catabolic 3-dehydroquinase (146 aa).

The active-site Proton acceptor is Tyr24. Asn78, His84, and Asp91 together coordinate substrate. Residue His104 is the Proton donor of the active site. Residues 105 to 106 (IT) and Arg115 contribute to the substrate site.

Belongs to the type-II 3-dehydroquinase family. Homododecamer. Adopts a ring-like structure, composed of an arrangement of two hexameric rings stacked on top of one another.

It catalyses the reaction 3-dehydroquinate = 3-dehydroshikimate + H2O. Its pathway is aromatic compound metabolism; 3,4-dihydroxybenzoate biosynthesis; 3,4-dihydroxybenzoate from 3-dehydroquinate: step 1/2. In terms of biological role, is involved in the catabolism of quinate. Allows the utilization of quinate as carbon source via the beta-ketoadipate pathway. In Candida dubliniensis (strain CD36 / ATCC MYA-646 / CBS 7987 / NCPF 3949 / NRRL Y-17841) (Yeast), this protein is Catabolic 3-dehydroquinase.